Consider the following 154-residue polypeptide: Nuclear cap-binding protein subunit 2 (154 aa).

Residues tyrosine 10, tyrosine 33, 102-106, 113-117, and 123-124 each bind mRNA; these read RVDWD, RQYGR, and QV. Positions 30 to 108 constitute an RRM domain; it reads CTLYVGNLSF…RLIRVDWDAG (79 aa).

The protein belongs to the RRM NCBP2 family. Component of the nuclear cap-binding complex (CBC), a heterodimer composed of Cbp80 and Cbp20 that interacts with m7GpppG-capped RNA. Interacts with Ars2.

It localises to the nucleus. Component of the cap-binding complex (CBC), which binds co-transcriptionally to the 5' cap of pre-mRNAs and is involved in various processes such as pre-mRNA splicing and RNA-mediated gene silencing (RNAi). The CBC complex is involved in miRNA-mediated RNA interference via its interaction with Ars2 and is required for primary microRNAs (miRNAs) processing. Also involved in innate immunity via the short interfering RNAs (siRNAs) processing machinery by restricting the viral RNA production. In the CBC complex, Cbp20 recognizes and binds capped RNAs (m7GpppG-capped RNA) but requires Cbp80 to stabilize the movement of its N-terminal loop and lock the CBC into a high affinity cap-binding state with the cap structure. This chain is Nuclear cap-binding protein subunit 2 (Cbp20), found in Drosophila erecta (Fruit fly).